Here is a 156-residue protein sequence, read N- to C-terminus: SsrA-binding protein (156 aa).

Belongs to the SmpB family.

It localises to the cytoplasm. In terms of biological role, required for rescue of stalled ribosomes mediated by trans-translation. Binds to transfer-messenger RNA (tmRNA), required for stable association of tmRNA with ribosomes. tmRNA and SmpB together mimic tRNA shape, replacing the anticodon stem-loop with SmpB. tmRNA is encoded by the ssrA gene; the 2 termini fold to resemble tRNA(Ala) and it encodes a 'tag peptide', a short internal open reading frame. During trans-translation Ala-aminoacylated tmRNA acts like a tRNA, entering the A-site of stalled ribosomes, displacing the stalled mRNA. The ribosome then switches to translate the ORF on the tmRNA; the nascent peptide is terminated with the 'tag peptide' encoded by the tmRNA and targeted for degradation. The ribosome is freed to recommence translation, which seems to be the essential function of trans-translation. In Trichodesmium erythraeum (strain IMS101), this protein is SsrA-binding protein.